Reading from the N-terminus, the 524-residue chain is Sexual development regulator velC (524 aa).

4 disordered regions span residues 114–195 (NRVL…PVHS), 322–349 (PGSG…MSSY), 380–413 (VDEE…HRFR), and 503–524 (GMGK…ARVE). Composition is skewed to polar residues over residues 131 to 153 (TTGS…ENAG) and 178 to 195 (LDSQ…PVHS). Residues 248–500 (SSSSRYRLFI…ELGFVELKTR (253 aa)) enclose the Velvet domain. Polar residues predominate over residues 393-402 (PSSTDDSTYD).

This sequence belongs to the velvet family. VelC subfamily. In terms of assembly, interacts with vosA.

It localises to the nucleus. Its function is as follows. Velvet-domain-containing protein that acts as a positive regulator of sexual development. Positively regulates the production of the sexual fruiting bodies called cleistothecia. This is Sexual development regulator velC from Emericella nidulans (strain FGSC A4 / ATCC 38163 / CBS 112.46 / NRRL 194 / M139) (Aspergillus nidulans).